A 259-amino-acid chain; its full sequence is Glutamate racemase (259 aa).

Residues 12 to 13 (DS) and 44 to 45 (YG) each bind substrate. Residue cysteine 75 is the Proton donor/acceptor of the active site. 76 to 77 (NT) contacts substrate. Cysteine 186 serves as the catalytic Proton donor/acceptor. 187-188 (TH) is a binding site for substrate.

Belongs to the aspartate/glutamate racemases family.

It catalyses the reaction L-glutamate = D-glutamate. The protein operates within cell wall biogenesis; peptidoglycan biosynthesis. Its function is as follows. Provides the (R)-glutamate required for cell wall biosynthesis. The polypeptide is Glutamate racemase (Clostridium novyi (strain NT)).